The sequence spans 251 residues: Triosephosphate isomerase (251 aa).

9-11 (NWK) is a binding site for substrate. The active-site Electrophile is His95. The Proton acceptor role is filled by Glu167. Substrate-binding positions include Gly173, Ser213, and 234–235 (GG). Ser213 is subject to Phosphoserine.

It belongs to the triosephosphate isomerase family. As to quaternary structure, homodimer.

It localises to the cytoplasm. The catalysed reaction is D-glyceraldehyde 3-phosphate = dihydroxyacetone phosphate. Its pathway is carbohydrate biosynthesis; gluconeogenesis. It participates in carbohydrate degradation; glycolysis; D-glyceraldehyde 3-phosphate from glycerone phosphate: step 1/1. Its function is as follows. Involved in the gluconeogenesis. Catalyzes stereospecifically the conversion of dihydroxyacetone phosphate (DHAP) to D-glyceraldehyde-3-phosphate (G3P). The polypeptide is Triosephosphate isomerase (Priestia megaterium (strain DSM 319 / IMG 1521) (Bacillus megaterium)).